The primary structure comprises 393 residues: Pyrimidine monooxygenase RutA (393 aa).

FMN is bound by residues I79–K80, N145, E154, R170–Y171, and S220.

This sequence belongs to the NtaA/SnaA/DszA monooxygenase family. RutA subfamily.

The enzyme catalyses uracil + FMNH2 + NADH + O2 = (Z)-3-ureidoacrylate + FMN + NAD(+) + H2O + H(+). It carries out the reaction thymine + FMNH2 + NADH + O2 = (Z)-2-methylureidoacrylate + FMN + NAD(+) + H2O + H(+). In terms of biological role, catalyzes the pyrimidine ring opening between N-3 and C-4 by an unusual flavin hydroperoxide-catalyzed mechanism, adding oxygen atoms in the process to yield ureidoacrylate peracid, that immediately reacts with FMN forming ureidoacrylate and FMN-N(5)-oxide. The FMN-N(5)-oxide reacts spontaneously with NADH to produce FMN. Requires the flavin reductase RutF to regenerate FMN in vivo. The polypeptide is Pyrimidine monooxygenase RutA (Escherichia coli O9:H4 (strain HS)).